The following is a 270-amino-acid chain: Formamidopyrimidine-DNA glycosylase (270 aa).

The active-site Schiff-base intermediate with DNA is proline 2. Glutamate 3 serves as the catalytic Proton donor. Lysine 58 acts as the Proton donor; for beta-elimination activity in catalysis. DNA contacts are provided by histidine 91, arginine 110, and arginine 151. An FPG-type zinc finger spans residues 236-270 (FVYGRGGQPCKVCGTALREVKLGQRASVYCPRCQR). Arginine 260 acts as the Proton donor; for delta-elimination activity in catalysis.

This sequence belongs to the FPG family. Monomer. It depends on Zn(2+) as a cofactor.

The enzyme catalyses Hydrolysis of DNA containing ring-opened 7-methylguanine residues, releasing 2,6-diamino-4-hydroxy-5-(N-methyl)formamidopyrimidine.. It carries out the reaction 2'-deoxyribonucleotide-(2'-deoxyribose 5'-phosphate)-2'-deoxyribonucleotide-DNA = a 3'-end 2'-deoxyribonucleotide-(2,3-dehydro-2,3-deoxyribose 5'-phosphate)-DNA + a 5'-end 5'-phospho-2'-deoxyribonucleoside-DNA + H(+). Involved in base excision repair of DNA damaged by oxidation or by mutagenic agents. Acts as a DNA glycosylase that recognizes and removes damaged bases. Has a preference for oxidized purines, such as 7,8-dihydro-8-oxoguanine (8-oxoG). Has AP (apurinic/apyrimidinic) lyase activity and introduces nicks in the DNA strand. Cleaves the DNA backbone by beta-delta elimination to generate a single-strand break at the site of the removed base with both 3'- and 5'-phosphates. This is Formamidopyrimidine-DNA glycosylase from Pseudomonas putida (strain GB-1).